Reading from the N-terminus, the 670-residue chain is Tyramine beta-hydroxylase (670 aa).

Residues 26–35 (HHQLAYHHHK) are compositionally biased toward basic residues. Positions 26-63 (HHQLAYHHHKQEQQQQQQQQQQQQAKQKQKQNGVQQGR) are disordered. Over residues 38–61 (QQQQQQQQQQQQAKQKQKQNGVQQ) the composition is skewed to low complexity. The helical transmembrane segment at 65–81 (PTFMPVMLLLLMATLLT) threads the bilayer. Positions 104 to 220 (KEIKLSWMVD…GTMYVVWARG (117 aa)) constitute a DOMON domain. N235 carries an N-linked (GlcNAc...) asparagine glycan. The active site involves Y281. Disulfide bonds link C283–C334 and C319–C344. H312 and H313 together coordinate Cu(2+). H382, H461, H463, and M536 together coordinate Cu(2+). Cystine bridges form between C439–C552, C443–C613, and C515–C537. The active site involves H461. N-linked (GlcNAc...) asparagine glycosylation is present at N614.

Belongs to the copper type II ascorbate-dependent monooxygenase family. Is most likely a monomer under physiological conditions, although under conditions of high pH and low ionic strength the dimeric form predominates. Both forms are equally active. It depends on Cu(2+) as a cofactor. As to expression, present in head and in neurons innervating the oviduct (at protein level).

The protein resides in the membrane. It catalyses the reaction tyramine + L-ascorbate + O2 = (R)-octopamine + L-dehydroascorbate + H2O. In terms of biological role, catalyzes the hydroxylation of tyramine into octopamine, a neurotransmitter involved in ovulation and locomotion. Functions in an amine-mediated Bacc-dependent signaling pathway that negatively regulates acute ethanol sensitivity. Involved in facilitation of nociceptive escape behavior in response to potentially damaging stimuli, such as high temperatures. The sequence is that of Tyramine beta-hydroxylase (Tbh) from Drosophila melanogaster (Fruit fly).